A 2995-amino-acid polypeptide reads, in one-letter code: Striated muscle preferentially expressed protein kinase (2995 aa).

The Ig-like 1 domain occupies 27 to 109 (PPVFLRKLKW…GEARTSAVLA (83 aa)). An intrachain disulfide couples C50 to C93. Disordered stretches follow at residues 250-272 (ITGS…KVSQ) and 384-467 (LTQT…NSKP). Residues 384–404 (LTQTDKQSSVSTESVPTQVIQ) show a composition bias toward polar residues. The segment covering 454-464 (PPEMNENQENN) has biased composition (low complexity). Ig-like domains lie at 613-701 (PAES…EELI) and 714-802 (PLFT…AELY). Residues C639 and C691 are joined by a disulfide bond. Residues 815-834 (SRLEKMPSIPEEPEVPEGEV) are disordered. Residues 840-930 (PDFIKPLSDL…AACYAHLYVA (91 aa)) enclose the Ig-like 4 domain. C861 and C912 form a disulfide bridge. Positions 937 to 1035 (PDGPPVIESV…TDLVQLVDRG (99 aa)) constitute a Fibronectin type-III 1 domain. Positions 1135–1224 (PPIFETIMED…GSVSCKAELT (90 aa)) constitute an Ig-like 5 domain. Residues 1255-1505 (YDIHKEIGRG…ATECLLHPWF (251 aa)) form the Protein kinase 1 domain. Residues 1261-1269 (IGRGAFSYV) and K1283 contribute to the ATP site. Residue D1372 is the Proton acceptor of the active site. Disordered regions lie at residues 1559 to 1582 (VPRN…DIDE), 1776 to 1839 (RNFR…STGD), 2017 to 2058 (LKRL…TGLK), 2163 to 2189 (VHSR…VEKQ), 2211 to 2254 (SGIS…KMDI), and 2268 to 2322 (SKET…KEDF). Polar residues predominate over residues 1786–1795 (SGDSGTFNND). Low complexity predominate over residues 2274–2284 (SSSSAHSIESS). The span at 2289-2299 (TEIRSRWDRWG) shows a compositional bias: basic and acidic residues. One can recognise an Ig-like 6 domain in the interval 2323–2413 (PPVFHIALKD…ASVTTSCILT (91 aa)). C2345 and C2397 are oxidised to a cystine. The region spanning 2420-2513 (CPGTPEIRQI…DGVSIDTKVT (94 aa)) is the Fibronectin type-III 2 domain. Disordered stretches follow at residues 2574–2609 (PKMS…YTAP) and 2648–2676 (GEGA…LRQG). Composition is skewed to polar residues over residues 2587 to 2605 (SSVN…SPRS) and 2652 to 2674 (SSPT…TTLR). The 253-residue stretch at 2682–2934 (YSFLDEKARG…IKDCLNHSWL (253 aa)) folds into the Protein kinase 2 domain. Residues 2688 to 2696 (KARGRFGVI) and K2711 each bind ATP. D2801 (proton acceptor) is an active-site residue.

This sequence belongs to the protein kinase superfamily. CAMK Ser/Thr protein kinase family. Post-translationally, may be autophosphorylated. Preferentially expressed in striated muscle.

It is found in the nucleus. The catalysed reaction is L-seryl-[protein] + ATP = O-phospho-L-seryl-[protein] + ADP + H(+). It carries out the reaction L-threonyl-[protein] + ATP = O-phospho-L-threonyl-[protein] + ADP + H(+). This chain is Striated muscle preferentially expressed protein kinase (speg), found in Danio rerio (Zebrafish).